We begin with the raw amino-acid sequence, 412 residues long: Chorismate synthase (412 aa).

Positions 40 and 46 each coordinate NADP(+). FMN-binding positions include 134–136 (RAS), 255–256 (QA), Gly-299, 314–318 (KPIAT), and Arg-340.

The protein belongs to the chorismate synthase family. Homotetramer. FMNH2 serves as cofactor.

The enzyme catalyses 5-O-(1-carboxyvinyl)-3-phosphoshikimate = chorismate + phosphate. It participates in metabolic intermediate biosynthesis; chorismate biosynthesis; chorismate from D-erythrose 4-phosphate and phosphoenolpyruvate: step 7/7. In terms of biological role, catalyzes the anti-1,4-elimination of the C-3 phosphate and the C-6 proR hydrogen from 5-enolpyruvylshikimate-3-phosphate (EPSP) to yield chorismate, which is the branch point compound that serves as the starting substrate for the three terminal pathways of aromatic amino acid biosynthesis. This reaction introduces a second double bond into the aromatic ring system. The chain is Chorismate synthase from Clavibacter michiganensis subsp. michiganensis (strain NCPPB 382).